A 510-amino-acid chain; its full sequence is ATP synthase subunit alpha (510 aa).

Residue 169–176 (GDRQTGKT) participates in ATP binding.

It belongs to the ATPase alpha/beta chains family. In terms of assembly, F-type ATPases have 2 components, CF(1) - the catalytic core - and CF(0) - the membrane proton channel. CF(1) has five subunits: alpha(3), beta(3), gamma(1), delta(1), epsilon(1). CF(0) has four main subunits: a(1), b(1), b'(1) and c(9-12).

The protein localises to the cell inner membrane. It catalyses the reaction ATP + H2O + 4 H(+)(in) = ADP + phosphate + 5 H(+)(out). In terms of biological role, produces ATP from ADP in the presence of a proton gradient across the membrane. The alpha chain is a regulatory subunit. This is ATP synthase subunit alpha from Rhodopseudomonas palustris (strain ATCC BAA-98 / CGA009).